We begin with the raw amino-acid sequence, 89 residues long: uncharacterized protein (89 aa).

This is an uncharacterized protein from Schizosaccharomyces pombe (strain 972 / ATCC 24843) (Fission yeast).